The primary structure comprises 247 residues: Protein SODIUM POTASSIUM ROOT DEFECTIVE 3 (247 aa).

A disordered region spans residues 130 to 166; the sequence is GSTGQDTVATEESEASAPKRGSSGPVEEKKKSSGSGS. Residues 167-235 enclose the HMA domain; the sequence is DQVVVLRVSL…KVKNAQFWTP (69 aa). Residues Cys180 and Cys183 each coordinate a metal cation.

Its subcellular location is the cytoplasm. Heavy metal-associated protein involved in salt tolerance. The sequence is that of Protein SODIUM POTASSIUM ROOT DEFECTIVE 3 from Arabidopsis thaliana (Mouse-ear cress).